Here is a 159-residue protein sequence, read N- to C-terminus: Elicitor-responsive protein 1 (159 aa).

Residues 1 to 112 enclose the C2 domain; it reads MAGSGVLEVH…SLGMEHGTWE (112 aa). Residues Asp21 and Asp30 each coordinate Ca(2+). Residue Ser44 is modified to Phosphoserine; by CPK. Positions 81, 83, 86, and 89 each coordinate Ca(2+).

Requires Ca(2+) as cofactor. Phosphorylated at Ser-44 by CPK18 in a calcium-dependent manner. In terms of tissue distribution, isoform 2 is expressed in young vascular tissues and tiller buds.

It is found in the cytoplasm. It localises to the cell membrane. Its function is as follows. May play a role in plant defense signaling. Isoform 2 binds to phospholipids in a Ca(2+)-dependent manner in response to pathogen elicitors. This chain is Elicitor-responsive protein 1 (ERG1), found in Oryza sativa subsp. japonica (Rice).